The sequence spans 1295 residues: DNA (cytosine-5)-methyltransferase CMT2 (1295 aa).

Disordered stretches follow at residues 1-23, 61-91, and 249-287; these read MLSP…SSSR, RRST…GKSQ, and NSSK…GKGM. A compositionally biased stretch (polar residues) spans 61 to 72; it reads RRSTTLNCNSPE. The 116-residue stretch at 578 to 693 folds into the BAH domain; sequence HTFSLGDFAY…VEYSTFQTLR (116 aa). Positions 727-1268 constitute an SAM-dependent MTase C5-type domain; sequence LPVLDLYSGC…YSLGMAFRGL (542 aa). Residues 814–835 form a disordered region; sequence SVNSTKETSGSSSSSDDDSDSE. Positions 837–902 constitute a Chromo domain; sequence YEVEKLVDIC…SGFKSKILPL (66 aa). C915 is a catalytic residue.

The protein belongs to the class I-like SAM-binding methyltransferase superfamily. C5-methyltransferase family.

It localises to the nucleus. It carries out the reaction a 2'-deoxycytidine in DNA + S-adenosyl-L-methionine = a 5-methyl-2'-deoxycytidine in DNA + S-adenosyl-L-homocysteine + H(+). Its function is as follows. May be involved in the CpXpG methylation and in gene silencing. The polypeptide is DNA (cytosine-5)-methyltransferase CMT2 (CMT2) (Arabidopsis thaliana (Mouse-ear cress)).